The primary structure comprises 259 residues: Protein unc-50 homolog (259 aa).

The residue at position 1 (M1) is an N-acetylmethionine. At 1–82 the chain is on the cytoplasmic side; sequence MLPSTSLSSS…TKDQWARDDP (82 aa). Residue S6 is modified to Phosphoserine. Residues 83–103 traverse the membrane as a helical segment; that stretch reads AFLVLLSIWLCVSTIGFGFVL. Residues 104–112 are Lumenal-facing; it reads DMGFFETIK. The helical transmembrane segment at 113-133 threads the bilayer; that stretch reads LLLWVVFIDCVGVGLLISTLM. Residues 134–163 lie on the Cytoplasmic side of the membrane; it reads WFVSNKYLVKRQSRDYDVEWGYAFDVHLNA. The chain crosses the membrane as a helical span at residues 164–184; that stretch reads FYPLLVILHFIQLFFINHVIL. Residues 185–187 lie on the Lumenal side of the membrane; the sequence is TDT. The helical transmembrane segment at 188–208 threads the bilayer; it reads FIGYLVGNTLWLIAVGYYIYV. Residues 209-222 lie on the Cytoplasmic side of the membrane; that stretch reads TFLGYSALPFLKNT. A helical membrane pass occupies residues 223-243; the sequence is VILLYPFAPLMVLYGLSLALG. Over 244–259 the chain is Lumenal; it reads WNFTHTLCSFYKYRVK.

The protein belongs to the unc-50 family. Highly expressed in periodontal ligament and bone marrow, but not in gingival fibroblasts.

The protein localises to the nucleus inner membrane. It localises to the golgi apparatus membrane. Involved in the cell surface expression of neuronal nicotinic receptors. Binds RNA. In Mus musculus (Mouse), this protein is Protein unc-50 homolog (Unc50).